We begin with the raw amino-acid sequence, 383 residues long: Probable cell wall hydrolase LytN (383 aa).

Residues 1–49 (MFIYYCKECSIMNKQQSKVRYSIRKVSIGILSISIGMFLALGMSNKAYA) form the signal peptide. Residues 175–219 (QIYTVKKGDTLSAIALKYKTTVSNIQNTNNIANPNLIFIGQKLKV) form the LysM domain. The 138-residue stretch at 241 to 378 (NSSTLNYLKT…NYENDMIFIR (138 aa)) folds into the Peptidase C51 domain.

It is found in the secreted. Its function is as follows. Probably involved in peptidoglycan hydrolysis. In Staphylococcus aureus (strain Mu50 / ATCC 700699), this protein is Probable cell wall hydrolase LytN (lytN).